The following is a 225-amino-acid chain: Cytochrome b6-f complex iron-sulfur subunit, chloroplastic (225 aa).

A chloroplast-targeting transit peptide spans Met-1–Gln-46. Residues Leu-69 to Ile-89 traverse the membrane as a helical segment. Positions Ala-112–Phe-208 constitute a Rieske domain. [2Fe-2S] cluster is bound by residues Cys-154, His-156, Cys-172, and His-175. Cysteines 159 and 174 form a disulfide.

The protein belongs to the Rieske iron-sulfur protein family. In terms of assembly, the 4 large subunits of the cytochrome b6-f complex are cytochrome b6, subunit IV (17 kDa polypeptide, petD), cytochrome f and the Rieske protein, while the 4 small subunits are petG, petL, petM and petN. The complex functions as a dimer. [2Fe-2S] cluster serves as cofactor.

It localises to the plastid. The protein resides in the chloroplast thylakoid membrane. It carries out the reaction 2 oxidized [plastocyanin] + a plastoquinol + 2 H(+)(in) = 2 reduced [plastocyanin] + a plastoquinone + 4 H(+)(out). In terms of biological role, component of the cytochrome b6-f complex, which mediates electron transfer between photosystem II (PSII) and photosystem I (PSI), cyclic electron flow around PSI, and state transitions. The sequence is that of Cytochrome b6-f complex iron-sulfur subunit, chloroplastic (petC) from Oryza sativa subsp. japonica (Rice).